Reading from the N-terminus, the 372-residue chain is Adaptive-response sensory-kinase SasA (372 aa).

Residues 147 to 360 enclose the Histidine kinase domain; it reads MVAHELRTPL…CFHFTVPVWQ (214 aa). His-150 is modified (phosphohistidine; by autocatalysis).

Homooligomerizes. Interacts with KaiC. Participates in the KaiBC complex, whose core is composed of a KaiC homohexamer and 6 KaiB.

It catalyses the reaction ATP + protein L-histidine = ADP + protein N-phospho-L-histidine.. Functionally, member of the two-component regulatory system SasA/RpaA involved in genome-wide circadian gene expression. One of several clock output pathways. Participates in the Kai clock protein complex, the main circadian regulator in cyanobacteria, via its interaction with KaiC. KaiC enhances the autophosphorylation activity of SasA, which then transfers its phosphate group to RpaA to activate it. In addition to its output function, recruits fold-shifted KaiB (KaiB(fs)) to KaiC to cooperatively form the KaiB(6):KaiC(6) complex (independent of SasA kinase activity). Required for robustness of the circadian rhythm of gene expression and is involved in clock output, also required for adaptation to light/dark cycles. In Prochlorococcus marinus subsp. pastoris (strain CCMP1986 / NIES-2087 / MED4), this protein is Adaptive-response sensory-kinase SasA.